The following is a 635-amino-acid chain: 1-deoxy-D-xylulose-5-phosphate synthase (635 aa).

Thiamine diphosphate contacts are provided by residues H74 and 115-117; that span reads AHS. D146 provides a ligand contact to Mg(2+). Thiamine diphosphate contacts are provided by residues 147–148, N176, Y283, and E365; that span reads GA. Position 176 (N176) interacts with Mg(2+).

Belongs to the transketolase family. DXPS subfamily. Homodimer. The cofactor is Mg(2+). Requires thiamine diphosphate as cofactor.

The catalysed reaction is D-glyceraldehyde 3-phosphate + pyruvate + H(+) = 1-deoxy-D-xylulose 5-phosphate + CO2. Its pathway is metabolic intermediate biosynthesis; 1-deoxy-D-xylulose 5-phosphate biosynthesis; 1-deoxy-D-xylulose 5-phosphate from D-glyceraldehyde 3-phosphate and pyruvate: step 1/1. Catalyzes the acyloin condensation reaction between C atoms 2 and 3 of pyruvate and glyceraldehyde 3-phosphate to yield 1-deoxy-D-xylulose-5-phosphate (DXP). This is 1-deoxy-D-xylulose-5-phosphate synthase from Paraburkholderia xenovorans (strain LB400).